Here is a 193-residue protein sequence, read N- to C-terminus: Sporulation-specific transcriptional regulator GerR (193 aa).

The 61-residue stretch at 1–61 folds into the HTH myb-type domain; sequence MTITRQDAWT…RWNSYVRKQY (61 aa). The H-T-H motif DNA-binding region spans 35-57; sequence FEEVGRALTRTAAACGFRWNSYV. Residues 122–177 adopt a coiled-coil conformation; it reads AQEFQLEREKLKEQIQSLQKELEDLRSENQTLRNQLEMTEEDYKALIDIMDRARKM.

It belongs to the RsfA transcriptional regulator family.

Functionally, transcriptional factor that regulates the expression of several late sporulation genes. Controls genes of both sigma-E and sigma-K regulons, acting alone on some genes and in conjunction with SpoIIID or GerE on others. Regulates, directly or indirectly, the expression of genes encoding coat proteins such as cgeA, cotB, cotC, cotG, cotU and cotY. Controls late sporulation genes in two ways: directly, by binding to the promoter region of genes such as cotB, cotU and spoVIF, and acting directly on their transcription, and indirectly, through the activation of SpoVIF, which stabilizes the transcriptional activator GerE and consequently induces the expression of the GerE-dependent genes, such as cotC and cotG. Its effect is strongly positive on spoVIF, cotC, and cotG, weakly positive on cotB, and negative on cotU. This is Sporulation-specific transcriptional regulator GerR from Bacillus subtilis (strain 168).